Reading from the N-terminus, the 165-residue chain is Shikimate kinase (165 aa).

11-16 (GAGKTT) is a binding site for ATP. Mg(2+) is bound at residue T15. Substrate-binding residues include D33, R57, and G78. R116 lines the ATP pocket. R134 contacts substrate.

Belongs to the shikimate kinase family. As to quaternary structure, monomer. Mg(2+) is required as a cofactor.

It localises to the cytoplasm. The catalysed reaction is shikimate + ATP = 3-phosphoshikimate + ADP + H(+). Its pathway is metabolic intermediate biosynthesis; chorismate biosynthesis; chorismate from D-erythrose 4-phosphate and phosphoenolpyruvate: step 5/7. In terms of biological role, catalyzes the specific phosphorylation of the 3-hydroxyl group of shikimic acid using ATP as a cosubstrate. This chain is Shikimate kinase, found in Bacillus cytotoxicus (strain DSM 22905 / CIP 110041 / 391-98 / NVH 391-98).